The primary structure comprises 95 residues: FXYD domain-containing ion transport regulator 6 (95 aa).

An N-terminal signal peptide occupies residues 1-18; that stretch reads MELVLVFLCSLLAPTVLA. The Extracellular segment spans residues 19 to 35; the sequence is SAAEKEKEMDPFHYDYQ. A helical membrane pass occupies residues 36-58; that stretch reads TLRIGGLVFAVVLFSVGILLILS. Residues 59 to 95 lie on the Cytoplasmic side of the membrane; that stretch reads RRCKCSFNQKPRAPGDEEAQVENLITANATEPQKAEN.

The protein belongs to the FXYD family. As to quaternary structure, regulatory subunit of the sodium/potassium-transporting ATPase which is composed of a catalytic alpha subunit, a non-catalytic beta subunit and an additional regulatory subunit. The regulatory subunit, a member of the FXYD protein family, modulates the enzymatic activity in a tissue- and isoform-specific way by changing affinities of the Na+/K+-ATPase toward Na(+), K(+) or ATP.

It is found in the cell membrane. Its function is as follows. Associates with and regulates the activity of the sodium/potassium-transporting ATPase (NKA) which catalyzes the hydrolysis of ATP coupled with the exchange of Na(+) and K(+) ions across the plasma membrane. Reduces the apparent affinity for intracellular Na(+) with no change in the apparent affinity for extracellular K(+). In addition to modulating NKA kinetics, may also function as a regulator of NKA localization to the plasma membrane. The chain is FXYD domain-containing ion transport regulator 6 (FXYD6) from Pongo abelii (Sumatran orangutan).